The primary structure comprises 467 residues: 2-succinylbenzoate--CoA ligase (467 aa).

This sequence belongs to the ATP-dependent AMP-binding enzyme family. MenE subfamily.

The catalysed reaction is 2-succinylbenzoate + ATP + CoA = 2-succinylbenzoyl-CoA + AMP + diphosphate. It functions in the pathway quinol/quinone metabolism; 1,4-dihydroxy-2-naphthoate biosynthesis; 1,4-dihydroxy-2-naphthoate from chorismate: step 5/7. The protein operates within quinol/quinone metabolism; menaquinone biosynthesis. Its function is as follows. Converts 2-succinylbenzoate (OSB) to 2-succinylbenzoyl-CoA (OSB-CoA). This is 2-succinylbenzoate--CoA ligase from Listeria monocytogenes serovar 1/2a (strain ATCC BAA-679 / EGD-e).